The chain runs to 115 residues: MNMLMVLTVNMMLSTCLILIAFWLPQLNLYTEKANPYECGFDPMSSARLPFSMKFFLVAITFLLFDLEIALLLPLSWAIQMPNINIMTLTSFILVSVLALGLAYEWLQKGLEWTE.

3 consecutive transmembrane segments (helical) span residues 4–24 (LMVL…AFWL), 55–75 (FFLV…LLPL), and 84–104 (INIM…GLAY).

This sequence belongs to the complex I subunit 3 family. As to quaternary structure, core subunit of respiratory chain NADH dehydrogenase (Complex I) which is composed of 45 different subunits. Interacts with TMEM186. Interacts with TMEM242.

The protein localises to the mitochondrion membrane. The catalysed reaction is a ubiquinone + NADH + 5 H(+)(in) = a ubiquinol + NAD(+) + 4 H(+)(out). Its function is as follows. Core subunit of the mitochondrial membrane respiratory chain NADH dehydrogenase (Complex I) that is believed to belong to the minimal assembly required for catalysis. Complex I functions in the transfer of electrons from NADH to the respiratory chain. The immediate electron acceptor for the enzyme is believed to be ubiquinone. The protein is NADH-ubiquinone oxidoreductase chain 3 of Onychomys leucogaster (Northern grasshopper mouse).